The sequence spans 313 residues: Ribosomal protein uL3 glutamine methyltransferase (313 aa).

It belongs to the protein N5-glutamine methyltransferase family. PrmB subfamily.

It carries out the reaction L-glutaminyl-[ribosomal protein uL3] + S-adenosyl-L-methionine = N(5)-methyl-L-glutaminyl-[ribosomal protein uL3] + S-adenosyl-L-homocysteine + H(+). Functionally, methylates large ribosomal subunit protein uL3 on a specific glutamine residue. The protein is Ribosomal protein uL3 glutamine methyltransferase of Pasteurella multocida (strain Pm70).